Consider the following 346-residue polypeptide: Serine/threonine-protein phosphatase PP1(5.9) (346 aa).

Positions 102, 104, 130, and 162 each coordinate Mn(2+). Catalysis depends on histidine 163, which acts as the Proton donor. Mn(2+)-binding residues include histidine 211 and histidine 287.

Belongs to the PPP phosphatase family. PP-1 subfamily. Mn(2+) is required as a cofactor.

The catalysed reaction is O-phospho-L-seryl-[protein] + H2O = L-seryl-[protein] + phosphate. It carries out the reaction O-phospho-L-threonyl-[protein] + H2O = L-threonyl-[protein] + phosphate. The polypeptide is Serine/threonine-protein phosphatase PP1(5.9) (Trypanosoma brucei brucei).